Here is a 419-residue protein sequence, read N- to C-terminus: D-amino acid dehydrogenase (419 aa).

3-17 (VLVLGAGVAGVSSVW) serves as a coordination point for FAD.

This sequence belongs to the DadA oxidoreductase family. Requires FAD as cofactor.

It catalyses the reaction a D-alpha-amino acid + A + H2O = a 2-oxocarboxylate + AH2 + NH4(+). It participates in amino-acid degradation; D-alanine degradation; NH(3) and pyruvate from D-alanine: step 1/1. In terms of biological role, oxidative deamination of D-amino acids. This is D-amino acid dehydrogenase from Neisseria gonorrhoeae (strain ATCC 700825 / FA 1090).